Consider the following 428-residue polypeptide: 47 kDa outer membrane protein (428 aa).

The signal sequence occupies residues 1–25; it reads MAKTSKFTQTLLASALAVVAGSASA.

This sequence belongs to the OmpP1/FadL family.

Its subcellular location is the cell outer membrane. In Pasteurella multocida (strain Pm70), this protein is 47 kDa outer membrane protein.